Here is a 73-residue protein sequence, read N- to C-terminus: UPF0337 protein lp_1708 (73 aa).

2 stretches are compositionally biased toward basic and acidic residues: residues 1 to 35 (MSDV…REAQ) and 44 to 73 (KAKD…KSDD). A disordered region spans residues 1–73 (MSDVNKKFDS…KDKMKKKSDD (73 aa)).

Belongs to the UPF0337 (CsbD) family.

The sequence is that of UPF0337 protein lp_1708 from Lactiplantibacillus plantarum (strain ATCC BAA-793 / NCIMB 8826 / WCFS1) (Lactobacillus plantarum).